A 504-amino-acid polypeptide reads, in one-letter code: Maturase K (504 aa).

It belongs to the intron maturase 2 family. MatK subfamily.

It is found in the plastid. The protein localises to the chloroplast. In terms of biological role, usually encoded in the trnK tRNA gene intron. Probably assists in splicing its own and other chloroplast group II introns. This is Maturase K from Vauquelinia californica (Arizona rosewood).